Here is a 394-residue protein sequence, read N- to C-terminus: Elongation factor Tu (394 aa).

In terms of domain architecture, tr-type G spans 10-204 (KPHVNVGTIG…ALDTYIPEPE (195 aa)). The interval 19-26 (GHVDHGKT) is G1. 19–26 (GHVDHGKT) is a binding site for GTP. Thr26 lines the Mg(2+) pocket. A G2 region spans residues 60–64 (GITIN). A G3 region spans residues 81 to 84 (DCPG). GTP-binding positions include 81–85 (DCPGH) and 136–139 (NKCD). Positions 136–139 (NKCD) are G4. The G5 stretch occupies residues 174–176 (SAL).

Belongs to the TRAFAC class translation factor GTPase superfamily. Classic translation factor GTPase family. EF-Tu/EF-1A subfamily. As to quaternary structure, monomer.

The protein resides in the cytoplasm. The catalysed reaction is GTP + H2O = GDP + phosphate + H(+). In terms of biological role, GTP hydrolase that promotes the GTP-dependent binding of aminoacyl-tRNA to the A-site of ribosomes during protein biosynthesis. In Vibrio cholerae serotype O1 (strain ATCC 39541 / Classical Ogawa 395 / O395), this protein is Elongation factor Tu.